An 886-amino-acid chain; its full sequence is Isoleucine--tRNA ligase (886 aa).

A 'HIGH' region motif is present at residues 60–70 (PYANGDIHIGH). Glu-546 serves as a coordination point for L-isoleucyl-5'-AMP. The short motif at 587–591 (KMSKS) is the 'KMSKS' region element. ATP is bound at residue Lys-590. Cys-856, Cys-859, Cys-870, and Cys-873 together coordinate Zn(2+).

Belongs to the class-I aminoacyl-tRNA synthetase family. IleS type 1 subfamily. As to quaternary structure, monomer. The cofactor is Zn(2+).

The protein resides in the cytoplasm. It catalyses the reaction tRNA(Ile) + L-isoleucine + ATP = L-isoleucyl-tRNA(Ile) + AMP + diphosphate. In terms of biological role, catalyzes the attachment of isoleucine to tRNA(Ile). As IleRS can inadvertently accommodate and process structurally similar amino acids such as valine, to avoid such errors it has two additional distinct tRNA(Ile)-dependent editing activities. One activity is designated as 'pretransfer' editing and involves the hydrolysis of activated Val-AMP. The other activity is designated 'posttransfer' editing and involves deacylation of mischarged Val-tRNA(Ile). The chain is Isoleucine--tRNA ligase from Mesomycoplasma hyopneumoniae (strain 232) (Mycoplasma hyopneumoniae).